The following is a 145-amino-acid chain: 3-hydroxyacyl-[acyl-carrier-protein] dehydratase FabZ (145 aa).

His-49 is a catalytic residue.

Belongs to the thioester dehydratase family. FabZ subfamily.

It localises to the cytoplasm. The enzyme catalyses a (3R)-hydroxyacyl-[ACP] = a (2E)-enoyl-[ACP] + H2O. Its function is as follows. Involved in unsaturated fatty acids biosynthesis. Catalyzes the dehydration of short chain beta-hydroxyacyl-ACPs and long chain saturated and unsaturated beta-hydroxyacyl-ACPs. The polypeptide is 3-hydroxyacyl-[acyl-carrier-protein] dehydratase FabZ (Rickettsia peacockii (strain Rustic)).